A 309-amino-acid polypeptide reads, in one-letter code: Probable manganese-dependent inorganic pyrophosphatase (309 aa).

Residues His-9, Asp-13, Asp-15, Asp-75, His-97, and Asp-149 each contribute to the Mn(2+) site.

Belongs to the PPase class C family. The cofactor is Mn(2+).

The protein resides in the cytoplasm. It catalyses the reaction diphosphate + H2O = 2 phosphate + H(+). This is Probable manganese-dependent inorganic pyrophosphatase from Bacillus cereus (strain 03BB102).